The sequence spans 252 residues: Trans-aconitate 2-methyltransferase (252 aa).

It belongs to the methyltransferase superfamily. Tam family.

It is found in the cytoplasm. The catalysed reaction is trans-aconitate + S-adenosyl-L-methionine = (E)-3-(methoxycarbonyl)pent-2-enedioate + S-adenosyl-L-homocysteine. Its function is as follows. Catalyzes the S-adenosylmethionine monomethyl esterification of trans-aconitate. The protein is Trans-aconitate 2-methyltransferase of Escherichia coli O9:H4 (strain HS).